A 200-amino-acid chain; its full sequence is dTTP/UTP pyrophosphatase (200 aa).

The active-site Proton acceptor is D72.

It belongs to the Maf family. YhdE subfamily. It depends on a divalent metal cation as a cofactor.

The protein resides in the cytoplasm. The catalysed reaction is dTTP + H2O = dTMP + diphosphate + H(+). It catalyses the reaction UTP + H2O = UMP + diphosphate + H(+). Its function is as follows. Nucleoside triphosphate pyrophosphatase that hydrolyzes dTTP and UTP. May have a dual role in cell division arrest and in preventing the incorporation of modified nucleotides into cellular nucleic acids. The chain is dTTP/UTP pyrophosphatase from Pseudomonas savastanoi pv. phaseolicola (strain 1448A / Race 6) (Pseudomonas syringae pv. phaseolicola (strain 1448A / Race 6)).